The chain runs to 88 residues: Small ribosomal subunit protein bS20 (88 aa).

Residues M1–M27 are disordered.

The protein belongs to the bacterial ribosomal protein bS20 family.

In terms of biological role, binds directly to 16S ribosomal RNA. The sequence is that of Small ribosomal subunit protein bS20 from Shewanella amazonensis (strain ATCC BAA-1098 / SB2B).